The sequence spans 219 residues: Probable N-acetyltransferase camello (219 aa).

2 helical membrane-spanning segments follow: residues 44–64 (FITFVAFTSVFMGTGSYVLAL) and 66–86 (SLVALLAAGWYGLYSEFHGLA). In terms of domain architecture, N-acetyltransferase spans 62 to 211 (LALTSLVALL…VHQYTSFTVA (150 aa)).

This sequence belongs to the camello family.

Its subcellular location is the golgi apparatus membrane. Functionally, plays a role in regulation of gastrulation, possibly by controlled reduction of cell adhesion in the periblastopore region which is necessary for optimal cell motility. The protein is Probable N-acetyltransferase camello of Xenopus tropicalis (Western clawed frog).